The chain runs to 725 residues: uncharacterized protein (725 aa).

Positions 363–556 (GTYVEIPLYS…FVTTRPEDSC (194 aa)) constitute a FtsK domain. 382–389 (GRTRGGKS) is a binding site for ATP.

Belongs to the FtsK/SpoIIIE/SftA family.

Probable DNA motor protein. May track DNA in a ATP-dependent manner by generating positive supercoils in front of it and negative supercoils behind it. This is an uncharacterized protein from Nostoc sp. (strain PCC 7120 / SAG 25.82 / UTEX 2576).